The chain runs to 164 residues: Dehydrin Rab16C (164 aa).

Gly residues predominate over residues 42-51 (MGGHHAGAGG). The tract at residues 42-164 (MGGHHAGAGG…KIKEKLPGQH (123 aa)) is disordered. A compositionally biased stretch (low complexity) spans 105 to 115 (GNNQQQQQMMG). The span at 128–138 (GMTGAGTGTGV) shows a compositional bias: gly residues. Over residues 147–164 (GEKKGFMDKIKEKLPGQH) the composition is skewed to basic and acidic residues.

It belongs to the plant dehydrin family.

The polypeptide is Dehydrin Rab16C (RAB16C) (Oryza sativa subsp. japonica (Rice)).